A 573-amino-acid polypeptide reads, in one-letter code: NEDD4-binding protein 3-B (573 aa).

3 disordered regions span residues 119–138 (EFSKSSLPERGHSDKSRFGP), 173–220 (CVGS…NSYS), and 384–405 (GENEELRQKQSQSDNSGPNLED). A compositionally biased stretch (basic and acidic residues) spans 125-135 (LPERGHSDKSR). Positions 186 to 196 (SNSHSNNPSES) are enriched in low complexity. 2 stretches are compositionally biased toward polar residues: residues 207–220 (DSKQNSINSLNSYS) and 392–401 (KQSQSDNSGP). Residues 287–474 (ESVEDVARQL…CLQALEDVKS (188 aa)) are a coiled coil.

It belongs to the N4BP3 family.

The protein resides in the cytoplasmic vesicle. It localises to the cell projection. Its subcellular location is the axon. The protein localises to the dendrite. Functionally, plays a role in axon and dendrite arborization during cranial nerve development. Also important for neural crest migration and early development of other anterior structures including eye, brain and cranial cartilage. This is NEDD4-binding protein 3-B from Xenopus laevis (African clawed frog).